The primary structure comprises 144 residues: MAPVLENRRARHDYEILETYEAGIALKGTEVKSLRAGKVDFTGSFARFEDGELYLENLYIAPYEKGSYANVDPRRKRKLLLHKHELRRLLGKVEQKGLTLVPLKIYFNERGYAKVLLGLARGKKAYEKRREDKKEAVRRALEEL.

The protein belongs to the SmpB family.

The protein resides in the cytoplasm. Functionally, required for rescue of stalled ribosomes mediated by trans-translation. Binds to transfer-messenger RNA (tmRNA), required for stable association of tmRNA with ribosomes. tmRNA and SmpB together mimic tRNA shape, replacing the anticodon stem-loop with SmpB. tmRNA is encoded by the ssrA gene; the 2 termini fold to resemble tRNA(Ala) and it encodes a 'tag peptide', a short internal open reading frame. During trans-translation Ala-aminoacylated tmRNA acts like a tRNA, entering the A-site of stalled ribosomes, displacing the stalled mRNA. The ribosome then switches to translate the ORF on the tmRNA; the nascent peptide is terminated with the 'tag peptide' encoded by the tmRNA and targeted for degradation. The ribosome is freed to recommence translation, which seems to be the essential function of trans-translation. This Thermus thermophilus (strain ATCC BAA-163 / DSM 7039 / HB27) protein is SsrA-binding protein.